Reading from the N-terminus, the 68-residue chain is Large ribosomal subunit protein uL29 (68 aa).

The protein belongs to the universal ribosomal protein uL29 family.

This is Large ribosomal subunit protein uL29 from Chloroflexus aurantiacus (strain ATCC 29364 / DSM 637 / Y-400-fl).